A 172-amino-acid polypeptide reads, in one-letter code: Shikimate kinase (172 aa).

11-16 (GSGKTT) provides a ligand contact to ATP. Thr15 is a binding site for Mg(2+). Asp33, Arg57, and Gly79 together coordinate substrate. An ATP-binding site is contributed by Arg117. Arg136 is a binding site for substrate.

Belongs to the shikimate kinase family. As to quaternary structure, monomer. The cofactor is Mg(2+).

It is found in the cytoplasm. The enzyme catalyses shikimate + ATP = 3-phosphoshikimate + ADP + H(+). It participates in metabolic intermediate biosynthesis; chorismate biosynthesis; chorismate from D-erythrose 4-phosphate and phosphoenolpyruvate: step 5/7. Catalyzes the specific phosphorylation of the 3-hydroxyl group of shikimic acid using ATP as a cosubstrate. The protein is Shikimate kinase of Caldicellulosiruptor saccharolyticus (strain ATCC 43494 / DSM 8903 / Tp8T 6331).